Consider the following 213-residue polypeptide: Adenylate kinase (213 aa).

10 to 15 serves as a coordination point for ATP; sequence GAGKGT. Residues 30–59 form an NMP region; sequence STGDMFRAAMANQTEMGVLAKSYIDKGDLV. Residues threonine 31, arginine 36, 57-59, 86-89, and glutamine 93 each bind AMP; these read DLV and GYPR. An LID region spans residues 127 to 160; the sequence is GRIINKKTGETFHKIFNPPVGDYKEEDFYQREDD. ATP contacts are provided by residues arginine 128 and 137–138; that span reads TF. Residues arginine 157 and arginine 168 each coordinate AMP. An ATP-binding site is contributed by lysine 196.

The protein belongs to the adenylate kinase family. Monomer.

It is found in the cytoplasm. It catalyses the reaction AMP + ATP = 2 ADP. The protein operates within purine metabolism; AMP biosynthesis via salvage pathway; AMP from ADP: step 1/1. Functionally, catalyzes the reversible transfer of the terminal phosphate group between ATP and AMP. Plays an important role in cellular energy homeostasis and in adenine nucleotide metabolism. The chain is Adenylate kinase from Streptococcus equi subsp. equi (strain 4047).